The chain runs to 479 residues: Adenosylhomocysteinase (479 aa).

3 residues coordinate substrate: Thr65, Asp145, and Glu205. 206–208 (TTT) is an NAD(+) binding site. Substrate contacts are provided by Lys235 and Asp239. Residues Asn240, 269–274 (GYGDVG), Glu292, Asn327, 348–350 (IGH), and Asn393 contribute to the NAD(+) site.

It belongs to the adenosylhomocysteinase family. NAD(+) serves as cofactor.

It localises to the cytoplasm. The catalysed reaction is S-adenosyl-L-homocysteine + H2O = L-homocysteine + adenosine. It functions in the pathway amino-acid biosynthesis; L-homocysteine biosynthesis; L-homocysteine from S-adenosyl-L-homocysteine: step 1/1. Its function is as follows. May play a key role in the regulation of the intracellular concentration of adenosylhomocysteine. This chain is Adenosylhomocysteinase, found in Herminiimonas arsenicoxydans.